The sequence spans 398 residues: Bifunctional enzyme IspD/IspF (398 aa).

Residues 1–234 form a 2-C-methyl-D-erythritol 4-phosphate cytidylyltransferase region; it reads MPNPPRTAAI…SRLTALLGDI (234 aa). Residues 235-398 are 2-C-methyl-D-erythritol 2,4-cyclodiphosphate synthase; it reads RTGTGYDVHA…LPWGAEGLAG (164 aa). 2 residues coordinate a divalent metal cation: Asp-241 and His-243. Residues 241–243 and 267–268 each bind 4-CDP-2-C-methyl-D-erythritol 2-phosphate; these read DVH and HS. His-275 lines the a divalent metal cation pocket. Residues 289–291, 365–368, Phe-372, and Arg-375 each bind 4-CDP-2-C-methyl-D-erythritol 2-phosphate; these read DIG and TTSE.

This sequence in the N-terminal section; belongs to the IspD/TarI cytidylyltransferase family. IspD subfamily. The protein in the C-terminal section; belongs to the IspF family. It depends on a divalent metal cation as a cofactor.

It carries out the reaction 2-C-methyl-D-erythritol 4-phosphate + CTP + H(+) = 4-CDP-2-C-methyl-D-erythritol + diphosphate. The enzyme catalyses 4-CDP-2-C-methyl-D-erythritol 2-phosphate = 2-C-methyl-D-erythritol 2,4-cyclic diphosphate + CMP. Its pathway is isoprenoid biosynthesis; isopentenyl diphosphate biosynthesis via DXP pathway; isopentenyl diphosphate from 1-deoxy-D-xylulose 5-phosphate: step 2/6. The protein operates within isoprenoid biosynthesis; isopentenyl diphosphate biosynthesis via DXP pathway; isopentenyl diphosphate from 1-deoxy-D-xylulose 5-phosphate: step 4/6. In terms of biological role, bifunctional enzyme that catalyzes the formation of 4-diphosphocytidyl-2-C-methyl-D-erythritol from CTP and 2-C-methyl-D-erythritol 4-phosphate (MEP) (IspD), and catalyzes the conversion of 4-diphosphocytidyl-2-C-methyl-D-erythritol 2-phosphate (CDP-ME2P) to 2-C-methyl-D-erythritol 2,4-cyclodiphosphate (ME-CPP) with a corresponding release of cytidine 5-monophosphate (CMP) (IspF). The protein is Bifunctional enzyme IspD/IspF of Rhodopseudomonas palustris (strain BisB5).